The sequence spans 129 residues: Small ribosomal subunit protein uS9 (129 aa).

It belongs to the universal ribosomal protein uS9 family.

In Helicobacter pylori (strain J99 / ATCC 700824) (Campylobacter pylori J99), this protein is Small ribosomal subunit protein uS9 (rpsI).